A 536-amino-acid chain; its full sequence is Pre-mRNA 3'-end-processing factor FIP1 (536 aa).

Composition is skewed to basic and acidic residues over residues methionine 1–valine 10 and valine 32–leucine 42. 3 disordered regions span residues methionine 1–valine 95, valine 212–proline 246, and phenylalanine 300–glutamate 536. Residues methionine 1–glycine 110 form a sufficient for interaction with PAPOLA region. A necessary for stimulating PAPOLA activity region spans residues methionine 1–proline 296. 2 stretches are compositionally biased toward acidic residues: residues aspartate 43–asparagine 54 and threonine 80–aspartate 94. Phosphoserine is present on residues serine 84, serine 86, and serine 88. The tract at residues lysine 136 to asparagine 219 is sufficient for interaction with CPSF4. The span at phenylalanine 300–leucine 344 shows a compositional bias: pro residues. Position 366 is a phosphotyrosine (tyrosine 366). Over residues leucine 374–glutamine 390 the composition is skewed to polar residues. The sufficient for interaction with CPSF1 and CSTF3 stretch occupies residues serine 383–glutamate 536. Basic and acidic residues predominate over residues tyrosine 394–serine 434. Residues arginine 397–aspartate 432 form an arg/Asp/Glu-rich domain region. Serine 434 carries the phosphoserine modification. Threonine 436 carries the phosphothreonine modification. 2 positions are modified to phosphoserine: serine 438 and serine 442. Residues aspartate 443 to histidine 470 show a composition bias toward basic and acidic residues. Residues lysine 484–arginine 493 are compositionally biased toward basic residues. Serine 496 carries the phosphoserine modification. Positions histidine 502–arginine 512 are enriched in basic residues.

The protein belongs to the FIP1 family. In terms of assembly, component of the cleavage and polyadenylation specificity factor (CPSF) complex, composed of CPSF1, CPSF2, CPSF3, CPSF4 and FIP1L1. Found in a complex with CPSF1, FIP1L1 and PAPOLA. Interacts with CPSF1, CPSF4, CSTF2 and CSTF3. Interacts with AHCYL1 (when phosphorylated); the interaction is direct and associates AHCYL1 with the CPSF complex and RNA. Interacts with PAPOLA; the interaction seems to be increased by the interaction with AHCYL1. Interacts with NUDT21/CPSF5; this interaction occurs in a RNA sequence-specific manner. Interacts (preferentially via unphosphorylated form and Arg/Glu/Asp-rich domain) with CPSF6 (via Arg/Ser-rich domain); this interaction mediates, at least in part, the interaction between the CFIm and CPSF complexes and may be inhibited by CPSF6 hyper-phosphorylation. Interacts (preferentially via unphosphorylated form and Arg/Asp/Glu-rich domain) with CPSF7 (via Arg/Ser-rich domain); this interaction mediates, at least in part, the interaction between the CFIm and CPSF complexes and may be inhibited by CPSF7 hyper-phosphorylation.

Its subcellular location is the nucleus. Functionally, component of the cleavage and polyadenylation specificity factor (CPSF) complex that plays a key role in pre-mRNA 3'-end formation, recognizing the AAUAAA signal sequence and interacting with poly(A) polymerase and other factors to bring about cleavage and poly(A) addition. FIP1L1 contributes to poly(A) site recognition and stimulates poly(A) addition. Binds to U-rich RNA sequence elements surrounding the poly(A) site. May act to tether poly(A) polymerase to the CPSF complex. The polypeptide is Pre-mRNA 3'-end-processing factor FIP1 (Fip1l1) (Rattus norvegicus (Rat)).